Reading from the N-terminus, the 117-residue chain is Large ribosomal subunit protein bL19 (117 aa).

The protein belongs to the bacterial ribosomal protein bL19 family.

In terms of biological role, this protein is located at the 30S-50S ribosomal subunit interface and may play a role in the structure and function of the aminoacyl-tRNA binding site. This chain is Large ribosomal subunit protein bL19, found in Bacteroides thetaiotaomicron (strain ATCC 29148 / DSM 2079 / JCM 5827 / CCUG 10774 / NCTC 10582 / VPI-5482 / E50).